A 495-amino-acid chain; its full sequence is Oxidoreductase AflY (495 aa).

A disordered region spans residues 1 to 22 (MGSHAPAVAGKPDPKKGPYQAT).

Belongs to the questin oxidase family.

It participates in mycotoxin biosynthesis; aflatoxin biosynthesis. In terms of biological role, oxidoreductase; part of the gene cluster that mediates the biosynthesis of aflatoxins, a group of polyketide-derived furanocoumarins, and part of the most toxic and carcinogenic compounds among the known mycotoxins. The four major aflatoxins produced by A.parasiticus are aflatoxin B1 (AFB1), aflatoxin B2 (AFB2), aflatoxin G1 (AFG1) and aflatoxin G2 (AFG2). Within the aflatoxin pathway, the oxidoreductase aflY seems to be involved in the conversion of versicolorin A (VERA) to demethylsterigmatocystin (DMST), through probable Baeyer-Villiger oxidation required for the formation of the xanthone ring. The biosynthesis of aflatoxins begins with the norsolorinic acid synthase aflC that combines a hexanoyl starter unit produced by the fatty acid synthase aflA/aflB and 7 malonyl-CoA extender units to synthesize the precursor NOR. The second step is the conversion of NOR to averantin and requires the norsolorinic acid ketoreductase aflD, which catalyzes the dehydration of norsolorinic acid to form (1'S)-averantin. The norsolorinic acid reductases aflE and aflF may also play a role in the conversion of NOR to AVN. The cytochrome P450 monooxygenase aflG then catalyzes the hydroxylation of AVN to 5'hydroxyaverantin (HAVN). The next step is performed by the 5'-hydroxyaverantin dehydrogenase aflH that transforms HAVN to 5'-oxoaverantin (OAVN) which is further converted to averufin (AVF) by aflK that plays a dual role in the pathway, as a 5'-oxoaverantin cyclase that mediates conversion of 5'-oxoaverantin, as well as a versicolorin B synthase in a later step in the pathway. The averufin oxidase aflI catalyzes the conversion of AVF to versiconal hemiacetal acetate (VHA). VHA is then the substrate for the versiconal hemiacetal acetate esterase aflJ to yield versiconal (VAL). Versicolorin B synthase aflK then converts VAL to versicolorin B (VERB) by closing the bisfuran ring of aflatoxin which is required for DNA-binding, thus giving to aflatoxin its activity as a mutagen. Then, the activity of the versicolorin B desaturase aflL leads to versicolorin A (VERA). A branch point starts from VERB since it can also be converted to dihydrodemethylsterigmatocystin (DMDHST), probably also by aflL, VERA being a precursor for aflatoxins B1 and G1, and DMDHST for aflatoxins B2 and G2. Next, the versicolorin reductase aflM and the cytochrome P450 monooxygenase aflN are involved in conversion of VERA to demethylsterigmatocystin (DMST). AflX and aflY seem also involved in this step, through probable aflX-mediated epoxide ring-opening step following versicolorin A oxidation and aflY-mediated Baeyer-Villiger oxidation required for the formation of the xanthone ring. The methyltransferase aflO then leads to the modification of DMST to sterigmatocystin (ST), and of DMDHST to dihydrosterigmatocystin (DHST). Both ST and DHST are then substrates of the O-methyltransferase aflP to yield O-methylsterigmatocystin (OMST) and dihydro-O-methylsterigmatocystin (DHOMST), respectively. Finally OMST is converted to aflatoxins B1 and G1, and DHOMST to aflatoxins B2 and G2, via the action of several enzymes including O-methylsterigmatocystin oxidoreductase aflQ, the cytochrome P450 monooxygenase aflU, but also the NADH-dependent flavin oxidoreductase nadA which is specifically required for the synthesis of AFG1. This Aspergillus parasiticus (strain ATCC 56775 / NRRL 5862 / SRRC 143 / SU-1) protein is Oxidoreductase AflY.